Consider the following 153-residue polypeptide: 6,7-dimethyl-8-ribityllumazine synthase (153 aa).

Residues Phe-22, 56–58 (AFE), and 80–82 (AVI) each bind 5-amino-6-(D-ribitylamino)uracil. (2S)-2-hydroxy-3-oxobutyl phosphate is bound at residue 85-86 (ST). His-88 acts as the Proton donor in catalysis. 5-amino-6-(D-ribitylamino)uracil is bound at residue Phe-113. Arg-127 is a binding site for (2S)-2-hydroxy-3-oxobutyl phosphate.

The protein belongs to the DMRL synthase family.

It carries out the reaction (2S)-2-hydroxy-3-oxobutyl phosphate + 5-amino-6-(D-ribitylamino)uracil = 6,7-dimethyl-8-(1-D-ribityl)lumazine + phosphate + 2 H2O + H(+). It functions in the pathway cofactor biosynthesis; riboflavin biosynthesis; riboflavin from 2-hydroxy-3-oxobutyl phosphate and 5-amino-6-(D-ribitylamino)uracil: step 1/2. Catalyzes the formation of 6,7-dimethyl-8-ribityllumazine by condensation of 5-amino-6-(D-ribitylamino)uracil with 3,4-dihydroxy-2-butanone 4-phosphate. This is the penultimate step in the biosynthesis of riboflavin. The polypeptide is 6,7-dimethyl-8-ribityllumazine synthase (Clostridium botulinum (strain Eklund 17B / Type B)).